A 541-amino-acid polypeptide reads, in one-letter code: MKTFTAALLVGTALAAVPQQQPLQTQVEDSAWAKPLEDLKDTIKSMGAEAKQAWDQLASAFPDALNEYTLFSAPKKHTRRPDSHWDHVVRGADVQGIWVDGVDGQKHREVDGKLENYDLRVKAVDPSKLGIDPGVKQFSGYLDDNENDKHLFYWFFESRNDPKNDPVVLWLNGGPGCSSLTGLFFELGPASIDKNLKVIHNPYSWNSNASVIFLDQPVNVGFSYSGSSVSDTIAAGKDVYALLTLFFKQFPQYAKQDFHIAGESYAGHYIPAFASEILSHKNRNINLKSVLIGNGLTDPLTQYPHYRPMACGEGGYPAVLDESSCRSMDNALPRCQSMIESCYSSESAWVCVPASIYCNNAMIGPYQRTGQNVYDVRTKCEDGSLCYTGLNYITQWLNQKPVMEALGAEVESYDSCNMDINRNFLFHGDWMKPYHRLVPGLIEKLPVLIYAGDADFICNWLGNKAWTETLEWSGRAEFASAEMKNLTIVDNKSKGKNIGQVKSHGNFTFMRLFGGGHMVPLDQPEASLEFFNRWLGGEWKA.

Residues 1 to 17 form the signal peptide; the sequence is MKTFTAALLVGTALAAV. The propeptide occupies 18 to 122; it reads PQQQPLQTQV…KLENYDLRVK (105 aa). Intrachain disulfides connect C177-C416, C311-C325, C335-C358, C342-C351, and C380-C386. N-linked (GlcNAc...) asparagine glycosylation is present at N208. S264 is a catalytic residue. D455 is a catalytic residue. N-linked (GlcNAc...) asparagine glycans are attached at residues N485, N491, and N506. Residue H517 is part of the active site.

This sequence belongs to the peptidase S10 family.

Its subcellular location is the vacuole. It catalyses the reaction Release of a C-terminal amino acid with broad specificity.. Vacuolar carboxypeptidase involved in degradation of small peptides. Digests preferentially peptides containing an aliphatic or hydrophobic residue in P1' position, as well as methionine, leucine or phenylalanine in P1 position of ester substrate. This is Carboxypeptidase Y homolog A (cpyA) from Uncinocarpus reesii (strain UAMH 1704).